Here is a 354-residue protein sequence, read N- to C-terminus: Acyl-CoA-binding domain-containing protein 2 (354 aa).

The helical; Signal-anchor transmembrane segment at 11-31 (VILGLIFSYLLAKLISIVVTF) threads the bilayer. The disordered stretch occupies residues 75–96 (AEQGSSRSDSVAGDDSEEDDDW). Residues 86–96 (AGDDSEEDDDW) are compositionally biased toward acidic residues. The region spanning 104–194 (LDEAFSAATL…VTQLYPTWLD (91 aa)) is the ACB domain. Residues 136-140 (YGLYK), lysine 162, and tyrosine 181 contribute to the an acyl-CoA site. ANK repeat units follow at residues 265-294 (EGRTPLHWAIDRGHLNIAKVLVDKNADVNA) and 298-327 (EGQTPLHYAVVCDREAIAEFLVKQNANTAA).

Belongs to the ACBP family. Interacts (via ankyrin repeats) with HIPP26 and the ethylene-responsive element-binding proteins RAP2-3/EBP and RAP2-12. Interacts with CSE. Mostly expressed in roots and flowers, and, to a lower extent, in stems, pods and leaves (at protein level).

It localises to the cell membrane. It is found in the endoplasmic reticulum membrane. The protein localises to the peroxisome membrane. In terms of biological role, binds medium- and long-chain acyl-CoA esters with very high affinity. Can interact in vitro with palmitoyl-CoA, but not with oleoyl-CoA. Binds to lead ions (Pb). May function as an intracellular carrier of acyl-CoA esters. Required for proper phospholipid and, to a lower extent, galactolipid composition. The polypeptide is Acyl-CoA-binding domain-containing protein 2 (ACBP2) (Arabidopsis thaliana (Mouse-ear cress)).